A 301-amino-acid polypeptide reads, in one-letter code: NDP-polyphosphate phosphotransferase 3 (301 aa).

Over residues 1–12 (MNRNGSTKDPRR) the composition is skewed to basic and acidic residues. A disordered region spans residues 1–21 (MNRNGSTKDPRRMTGAATGEI).

The protein belongs to the polyphosphate kinase 2 (PPK2) family. Class I subfamily. Mg(2+) serves as cofactor.

It carries out the reaction [phosphate](n) + ATP = [phosphate](n+1) + ADP. It catalyses the reaction [phosphate](n) + CTP = [phosphate](n+1) + CDP. The enzyme catalyses [phosphate](n) + GTP = [phosphate](n+1) + GDP. The catalysed reaction is [phosphate](n) + UTP = [phosphate](n+1) + UDP. Functionally, uses inorganic polyphosphate (polyP) as a donor to convert NDP to NTP. PolyP hydrolysis is slightly faster with UDP, but it can also use ADP, GDP and CDP. This Ruegeria pomeroyi (strain ATCC 700808 / DSM 15171 / DSS-3) (Silicibacter pomeroyi) protein is NDP-polyphosphate phosphotransferase 3.